Reading from the N-terminus, the 780-residue chain is Oocyte zinc finger protein XlCOF8.4 (780 aa).

15 consecutive C2H2-type zinc fingers follow at residues 250–272 (FPCSECGKCFAGSSELNVHRRTH), 278–300 (FSCSQCGKCFSNQTKLKYHHRTH), 306–328 (FSCSECGKCFSTPHVRARHQKTH), 334–356 (FPCSECGKCFARSSDVTVHRRTH), 362–384 (YSCSQCGKCFTRSSDLNVHRRTH), 390–412 (YSCSHCGKCFTTSSELNVHRRTH), 418–440 (YSCSECGKSFPTSSEFTSHWKTH), 446–468 (FSCVQCGKCFSKDTHLKYHYRTH), 474–496 (FSCFECGKCFTHNGSLKVHLKIH), 618–640 (LSCSECGKCFSTYHVLARHQKTH), 646–668 (FSCSECEKCYARSSDLNVHRRTH), 674–696 (YSCSECGKCFTRSSDFNVHRRTH), 702–724 (YSCSECGRCFPTSSVLTSHWRTH), 730–752 (FSCTECGKCFSRETYLKYHHRTH), and 758–780 (FSCSECGKCFTCNSSLKVHFQLH).

This sequence belongs to the krueppel C2H2-type zinc-finger protein family.

It localises to the nucleus. Its function is as follows. May be involved in transcriptional regulation. In Xenopus laevis (African clawed frog), this protein is Oocyte zinc finger protein XlCOF8.4.